Consider the following 69-residue polypeptide: Small archaeal modifier protein 2 (69 aa).

Lys-55 is covalently cross-linked (Glycyl lysine isopeptide (Lys-Gly) (interchain with G-Cter in SAMP2)). A 1-thioglycine; alternate modification is found at Gly-69. Gly-69 bears the Glycyl adenylate; alternate mark. Residue Gly-69 forms a Glycyl lysine isopeptide (Gly-Lys) (interchain with K-? in acceptor proteins); alternate linkage.

Post-translationally, the C-terminal glycine is likely acyl-adenylated (-COAMP) by UbaA, and also probably thiocarboxylated (-COSH) to function in sulfur transfer.

In terms of biological role, functions as a protein modifier covalently attached to lysine residues of substrate proteins, as well as a sulfur carrier in tRNA thiolation. The protein modification process is termed sampylation and involves the formation of an isopeptide bond between the SAMP2 C-terminal glycine carboxylate and the epsilon-amino group of lysine residues on target proteins. Is able to form polymeric chains with itself likely at Lys-55, similar to ubiquitin and other ubiquitin-like proteins. May serve as a proteolytic signal in the cell to target proteins for degradation by proteasomes. This is Small archaeal modifier protein 2 from Pyrococcus furiosus (strain ATCC 43587 / DSM 3638 / JCM 8422 / Vc1).